Reading from the N-terminus, the 542-residue chain is CTP synthase (542 aa).

Residues 1–265 form an amidoligase domain region; that stretch reads MTRFIFITGG…DVQVCRHFHL (265 aa). CTP is bound at residue S13. S13 lines the UTP pocket. Residues 14 to 19 and D71 each bind ATP; that span reads SLGKGL. D71 and E139 together coordinate Mg(2+). CTP-binding positions include 146 to 148, 186 to 191, and K222; these read DIE and KTKPTQ. Residues 186–191 and K222 each bind UTP; that span reads KTKPTQ. Positions 291 to 541 constitute a Glutamine amidotransferase type-1 domain; sequence TIAVVGKYTS…VQAAITQSRL (251 aa). Residue G353 participates in L-glutamine binding. Residue C380 is the Nucleophile; for glutamine hydrolysis of the active site. L-glutamine contacts are provided by residues 381 to 384, E404, and R469; that span reads FGMQ. Residues H514 and E516 contribute to the active site.

The protein belongs to the CTP synthase family. In terms of assembly, homotetramer.

It catalyses the reaction UTP + L-glutamine + ATP + H2O = CTP + L-glutamate + ADP + phosphate + 2 H(+). The catalysed reaction is L-glutamine + H2O = L-glutamate + NH4(+). The enzyme catalyses UTP + NH4(+) + ATP = CTP + ADP + phosphate + 2 H(+). It participates in pyrimidine metabolism; CTP biosynthesis via de novo pathway; CTP from UDP: step 2/2. With respect to regulation, allosterically activated by GTP, when glutamine is the substrate; GTP has no effect on the reaction when ammonia is the substrate. The allosteric effector GTP functions by stabilizing the protein conformation that binds the tetrahedral intermediate(s) formed during glutamine hydrolysis. Inhibited by the product CTP, via allosteric rather than competitive inhibition. Catalyzes the ATP-dependent amination of UTP to CTP with either L-glutamine or ammonia as the source of nitrogen. Regulates intracellular CTP levels through interactions with the four ribonucleotide triphosphates. The protein is CTP synthase of Rhodospirillum rubrum (strain ATCC 11170 / ATH 1.1.1 / DSM 467 / LMG 4362 / NCIMB 8255 / S1).